The following is a 367-amino-acid chain: Queuine tRNA-ribosyltransferase (367 aa).

The active-site Proton acceptor is aspartate 89. Residues 89-93 (DSGGF), aspartate 143, glutamine 185, and glycine 212 contribute to the substrate site. The interval 243 to 249 (GVGTPSD) is RNA binding. The active-site Nucleophile is the aspartate 262. The RNA binding; important for wobble base 34 recognition stretch occupies residues 267-271 (TRNAR). Residues cysteine 300, cysteine 302, cysteine 305, and histidine 331 each coordinate Zn(2+).

Belongs to the queuine tRNA-ribosyltransferase family. As to quaternary structure, homodimer. Within each dimer, one monomer is responsible for RNA recognition and catalysis, while the other monomer binds to the replacement base PreQ1. Requires Zn(2+) as cofactor.

The enzyme catalyses 7-aminomethyl-7-carbaguanine + guanosine(34) in tRNA = 7-aminomethyl-7-carbaguanosine(34) in tRNA + guanine. It participates in tRNA modification; tRNA-queuosine biosynthesis. Catalyzes the base-exchange of a guanine (G) residue with the queuine precursor 7-aminomethyl-7-deazaguanine (PreQ1) at position 34 (anticodon wobble position) in tRNAs with GU(N) anticodons (tRNA-Asp, -Asn, -His and -Tyr). Catalysis occurs through a double-displacement mechanism. The nucleophile active site attacks the C1' of nucleotide 34 to detach the guanine base from the RNA, forming a covalent enzyme-RNA intermediate. The proton acceptor active site deprotonates the incoming PreQ1, allowing a nucleophilic attack on the C1' of the ribose to form the product. After dissociation, two additional enzymatic reactions on the tRNA convert PreQ1 to queuine (Q), resulting in the hypermodified nucleoside queuosine (7-(((4,5-cis-dihydroxy-2-cyclopenten-1-yl)amino)methyl)-7-deazaguanosine). The chain is Queuine tRNA-ribosyltransferase from Thiobacillus denitrificans (strain ATCC 25259 / T1).